The sequence spans 25 residues: Dermaseptin-5.2TR (25 aa).

Val25 is modified (valine amide).

Expressed by the skin glands.

The protein localises to the secreted. In terms of biological role, has antimicrobial activity. This chain is Dermaseptin-5.2TR, found in Phyllomedusa trinitatis (Trinidad leaf frog).